We begin with the raw amino-acid sequence, 253 residues long: 5'-nucleotidase SurE (253 aa).

Residues Asp-8, Asp-9, Ser-39, and Asn-92 each coordinate a divalent metal cation.

The protein belongs to the SurE nucleotidase family. Requires a divalent metal cation as cofactor.

It localises to the cytoplasm. The catalysed reaction is a ribonucleoside 5'-phosphate + H2O = a ribonucleoside + phosphate. In terms of biological role, nucleotidase that shows phosphatase activity on nucleoside 5'-monophosphates. This chain is 5'-nucleotidase SurE, found in Burkholderia mallei (strain NCTC 10247).